Consider the following 356-residue polypeptide: Holliday junction branch migration complex subunit RuvB (356 aa).

Residues 13-197 (LPPARRMLSA…FGIVARLEFY (185 aa)) form a large ATPase domain (RuvB-L) region. Residues Leu36, Arg37, Gly78, Lys81, Thr82, Thr83, 144 to 146 (EDY), Arg187, Tyr197, and Arg234 contribute to the ATP site. Thr82 provides a ligand contact to Mg(2+). The small ATPAse domain (RuvB-S) stretch occupies residues 198–268 (TPEELARIVK…IANRALAMLD (71 aa)). The head domain (RuvB-H) stretch occupies residues 271–356 (PQGFDLMDRK…RGNAENLFEE (86 aa)). The DNA site is built by Arg326 and Arg331.

The protein belongs to the RuvB family. As to quaternary structure, homohexamer. Forms an RuvA(8)-RuvB(12)-Holliday junction (HJ) complex. HJ DNA is sandwiched between 2 RuvA tetramers; dsDNA enters through RuvA and exits via RuvB. An RuvB hexamer assembles on each DNA strand where it exits the tetramer. Each RuvB hexamer is contacted by two RuvA subunits (via domain III) on 2 adjacent RuvB subunits; this complex drives branch migration. In the full resolvosome a probable DNA-RuvA(4)-RuvB(12)-RuvC(2) complex forms which resolves the HJ.

The protein localises to the cytoplasm. The enzyme catalyses ATP + H2O = ADP + phosphate + H(+). Its function is as follows. The RuvA-RuvB-RuvC complex processes Holliday junction (HJ) DNA during genetic recombination and DNA repair, while the RuvA-RuvB complex plays an important role in the rescue of blocked DNA replication forks via replication fork reversal (RFR). RuvA specifically binds to HJ cruciform DNA, conferring on it an open structure. The RuvB hexamer acts as an ATP-dependent pump, pulling dsDNA into and through the RuvAB complex. RuvB forms 2 homohexamers on either side of HJ DNA bound by 1 or 2 RuvA tetramers; 4 subunits per hexamer contact DNA at a time. Coordinated motions by a converter formed by DNA-disengaged RuvB subunits stimulates ATP hydrolysis and nucleotide exchange. Immobilization of the converter enables RuvB to convert the ATP-contained energy into a lever motion, pulling 2 nucleotides of DNA out of the RuvA tetramer per ATP hydrolyzed, thus driving DNA branch migration. The RuvB motors rotate together with the DNA substrate, which together with the progressing nucleotide cycle form the mechanistic basis for DNA recombination by continuous HJ branch migration. Branch migration allows RuvC to scan DNA until it finds its consensus sequence, where it cleaves and resolves cruciform DNA. This chain is Holliday junction branch migration complex subunit RuvB, found in Polaromonas naphthalenivorans (strain CJ2).